Reading from the N-terminus, the 398-residue chain is 4-hydroxy-3-methylbut-2-enyl diphosphate reductase (398 aa).

C66 is a [4Fe-4S] cluster binding site. Residue H96 participates in (2E)-4-hydroxy-3-methylbut-2-enyl diphosphate binding. H96 provides a ligand contact to dimethylallyl diphosphate. H96 contacts isopentenyl diphosphate. Residue C157 coordinates [4Fe-4S] cluster. Position 185 (H185) interacts with (2E)-4-hydroxy-3-methylbut-2-enyl diphosphate. Position 185 (H185) interacts with dimethylallyl diphosphate. H185 lines the isopentenyl diphosphate pocket. Catalysis depends on E187, which acts as the Proton donor. (2E)-4-hydroxy-3-methylbut-2-enyl diphosphate is bound at residue T250. Residue C288 participates in [4Fe-4S] cluster binding. S317, S318, N319, and S380 together coordinate (2E)-4-hydroxy-3-methylbut-2-enyl diphosphate. S317, S318, N319, and S380 together coordinate dimethylallyl diphosphate. Residues S317, S318, N319, and S380 each coordinate isopentenyl diphosphate.

This sequence belongs to the IspH family. [4Fe-4S] cluster is required as a cofactor.

The catalysed reaction is isopentenyl diphosphate + 2 oxidized [2Fe-2S]-[ferredoxin] + H2O = (2E)-4-hydroxy-3-methylbut-2-enyl diphosphate + 2 reduced [2Fe-2S]-[ferredoxin] + 2 H(+). The enzyme catalyses dimethylallyl diphosphate + 2 oxidized [2Fe-2S]-[ferredoxin] + H2O = (2E)-4-hydroxy-3-methylbut-2-enyl diphosphate + 2 reduced [2Fe-2S]-[ferredoxin] + 2 H(+). Its pathway is isoprenoid biosynthesis; dimethylallyl diphosphate biosynthesis; dimethylallyl diphosphate from (2E)-4-hydroxy-3-methylbutenyl diphosphate: step 1/1. It functions in the pathway isoprenoid biosynthesis; isopentenyl diphosphate biosynthesis via DXP pathway; isopentenyl diphosphate from 1-deoxy-D-xylulose 5-phosphate: step 6/6. Catalyzes the conversion of 1-hydroxy-2-methyl-2-(E)-butenyl 4-diphosphate (HMBPP) into a mixture of isopentenyl diphosphate (IPP) and dimethylallyl diphosphate (DMAPP). Acts in the terminal step of the DOXP/MEP pathway for isoprenoid precursor biosynthesis. This Prochlorococcus marinus (strain AS9601) protein is 4-hydroxy-3-methylbut-2-enyl diphosphate reductase.